A 259-amino-acid chain; its full sequence is Truncated Ankyrin repeat protein OPG003 (259 aa).

The protein belongs to the orthopoxvirus OPG003 family.

The sequence is that of Truncated Ankyrin repeat protein OPG003 (OPG003) from Vaccinia virus (strain Copenhagen) (VACV).